A 2138-amino-acid polypeptide reads, in one-letter code: Non-reducing polyketide synthase rads2 (2138 aa).

Residues 11–249 (LIFGDQTDSW…NPLNIHALQH (239 aa)) form an N-terminal acylcarrier protein transacylase (SAT) domain region. The 432-residue stretch at 373–804 (SGRIAIVGMA…GGNACMLLED (432 aa)) folds into the Ketosynthase family 3 (KS3) domain. Catalysis depends on for beta-ketoacyl synthase activity residues Cys-549, His-684, and His-724. The tract at residues 901–1184 (VFVFGGQGSH…KGVCTSFVRA (284 aa)) is malonyl-CoA:ACP transacylase (MAT) domain. Ser-992 functions as the For acyl/malonyl transferase activity in the catalytic mechanism. An N-terminal hotdog fold region spans residues 1291–1437 (AQYVVQESPS…KDVQRLQADW (147 aa)). The PKS/mFAS DH domain occupies 1291–1610 (AQYVVQESPS…FHEISNATLK (320 aa)). Positions 1303 to 1607 (KKIQVTFRAS…GLEFHEISNA (305 aa)) are product template (PT) domain. A C-terminal hotdog fold region spans residues 1459–1610 (HGHRFQPDIF…FHEISNATLK (152 aa)). The segment at 1618–1666 (SKSVLKPDNAAPLKAPEKKEDATPTAPKKSADPGKEEEEEGDTATPAAV) is disordered. Residues 1666 to 1740 (VGEFEVIIQT…DLRRAFAMAP (75 aa)) form the Carrier domain. Residue Ser-1700 is modified to O-(pantetheine 4'-phosphoryl)serine. Residues 1740–1771 (PSSSSSTSASESVSESLDDSSSTSRSATPSSS) are compositionally biased toward low complexity. Disordered stretches follow at residues 1740–1781 (PSSS…GFVE) and 1807–1828 (QATK…SSPA). Residues 1860 to 2006 (ADGTGSIATY…TRRHLGAMFS (147 aa)) are thioesterase (TE) domain.

It participates in secondary metabolite biosynthesis. Non-reducing polyketide synthase; part of the gene cluster that mediates the biosynthesis of radicicol, a resorcylic acid lactone (RAL) that irreversibly inhibits the HSP90 molecular chaperone, an important target for cancer chemotherapy. The cluster encodes only two apparent post-PKS enzymes, a cytochrome P450 monooxygenase (radP) and a non-heme halogenase (radH) that introduce the epoxide and the chlorine, respectively. If this cluster includes all the genes required for radicicol biosynthesis, the remaining structural features of radicicol are presumably generated by the PKSs rads1 and rads2. The C-2' ketone could arise if the R-PKS rads1 and NR-PKS rads2 each carry out four iterations, in contrast to the five iteration-three iteration split for the hypothemycin PKSs. The origin of the cis 5',6' double bond is not known. The radicicol R-PKS rads1 ER domain may catalyze either double bond isomerization or reduction in the third iteration. The protein is Non-reducing polyketide synthase rads2 of Floropilus chiversii (Chaetomium chiversii).